Consider the following 337-residue polypeptide: Pyridoxal 5'-phosphate synthase subunit PdxS (337 aa).

Residue Asp-65 participates in D-ribose 5-phosphate binding. The Schiff-base intermediate with D-ribose 5-phosphate role is filled by Lys-122. Position 194 (Gly-194) interacts with D-ribose 5-phosphate. Lys-206 is a binding site for D-glyceraldehyde 3-phosphate. Residues Gly-255 and 276-277 each bind D-ribose 5-phosphate; that span reads GS.

Belongs to the PdxS/SNZ family. In terms of assembly, in the presence of PdxT, forms a dodecamer of heterodimers.

The catalysed reaction is aldehydo-D-ribose 5-phosphate + D-glyceraldehyde 3-phosphate + L-glutamine = pyridoxal 5'-phosphate + L-glutamate + phosphate + 3 H2O + H(+). It functions in the pathway cofactor biosynthesis; pyridoxal 5'-phosphate biosynthesis. Its function is as follows. Catalyzes the formation of pyridoxal 5'-phosphate from ribose 5-phosphate (RBP), glyceraldehyde 3-phosphate (G3P) and ammonia. The ammonia is provided by the PdxT subunit. Can also use ribulose 5-phosphate and dihydroxyacetone phosphate as substrates, resulting from enzyme-catalyzed isomerization of RBP and G3P, respectively. The chain is Pyridoxal 5'-phosphate synthase subunit PdxS from Pyrobaculum arsenaticum (strain DSM 13514 / JCM 11321 / PZ6).